Consider the following 350-residue polypeptide: tRNA uridine(34) hydroxylase (350 aa).

Residues 146–240 (DDPDALFIDM…YARKAREQGL (95 aa)) form the Rhodanese domain. Cys200 functions as the Cysteine persulfide intermediate in the catalytic mechanism.

It belongs to the TrhO family.

It catalyses the reaction uridine(34) in tRNA + AH2 + O2 = 5-hydroxyuridine(34) in tRNA + A + H2O. Catalyzes oxygen-dependent 5-hydroxyuridine (ho5U) modification at position 34 in tRNAs, the first step in 5-carboxymethoxyuridine (cmo5U) biosynthesis. May be part of an alternate pathway, which is able to bypass cmo5U biogenesis in a subset of tRNAs under aerobic conditions. The protein is tRNA uridine(34) hydroxylase of Escherichia coli O81 (strain ED1a).